A 181-amino-acid chain; its full sequence is Cell division protein SepF (181 aa).

A compositionally biased stretch (acidic residues) spans 18–27; the sequence is EDYLDDDDYD. Positions 18–42 are disordered; the sequence is EDYLDDDDYDDGRAVGHDDRRAMHE. A compositionally biased stretch (basic and acidic residues) spans 28–42; the sequence is DGRAVGHDDRRAMHE.

This sequence belongs to the SepF family. In terms of assembly, homodimer. Interacts with FtsZ.

The protein resides in the cytoplasm. In terms of biological role, cell division protein that is part of the divisome complex and is recruited early to the Z-ring. Probably stimulates Z-ring formation, perhaps through the cross-linking of FtsZ protofilaments. Its function overlaps with FtsA. This chain is Cell division protein SepF, found in Frankia alni (strain DSM 45986 / CECT 9034 / ACN14a).